Consider the following 635-residue polypeptide: Probable potassium transport system protein Kup (635 aa).

12 helical membrane passes run 20–40 (MALVIGAIGVVFGDIGTSPLY), 62–82 (VLSLAFWALMITVTLKYVTII), 111–131 (AYVVGILGIFGASLFFGDGVI), 149–169 (PSLHPFIVPITVVVLLVVFMV), 180–200 (VFGPITCLWFLSLGAIGIWNI), 223–243 (GWHGVFILGAVVLAVTGGEAL), 259–279 (WYFFVLPMLLLNYLGQGALVL), 292–312 (AVPSWALYPMIILATLAAVIA), 349–369 (IYVPGINWLLMVMVIALVLIF), 377–397 (VAYGISVSMTMLIDTLLLALV), 408–428 (WVLPLCVVFFIIELAFVIANG), and 429–449 (AKLLQGAWFPLALGIVVFTLM).

This sequence belongs to the HAK/KUP transporter (TC 2.A.72) family.

The protein resides in the cell inner membrane. The catalysed reaction is K(+)(in) + H(+)(in) = K(+)(out) + H(+)(out). Transport of potassium into the cell. Likely operates as a K(+):H(+) symporter. The polypeptide is Probable potassium transport system protein Kup (Xanthomonas campestris pv. campestris (strain 8004)).